The chain runs to 274 residues: NH(3)-dependent NAD(+) synthetase (274 aa).

Gly46–Ser53 is an ATP binding site. Residue Asp52 coordinates Mg(2+). Arg140 is a deamido-NAD(+) binding site. Residue Thr160 participates in ATP binding. A Mg(2+)-binding site is contributed by Glu165. Deamido-NAD(+) is bound by residues Lys173 and Asp180. The ATP site is built by Lys189 and Thr211. Residue His260–Lys261 participates in deamido-NAD(+) binding.

Belongs to the NAD synthetase family. In terms of assembly, homodimer.

The catalysed reaction is deamido-NAD(+) + NH4(+) + ATP = AMP + diphosphate + NAD(+) + H(+). The protein operates within cofactor biosynthesis; NAD(+) biosynthesis; NAD(+) from deamido-NAD(+) (ammonia route): step 1/1. In terms of biological role, catalyzes the ATP-dependent amidation of deamido-NAD to form NAD. Uses ammonia as a nitrogen source. This chain is NH(3)-dependent NAD(+) synthetase, found in Listeria monocytogenes serovar 1/2a (strain ATCC BAA-679 / EGD-e).